Here is a 464-residue protein sequence, read N- to C-terminus: ATP synthase subunit beta (464 aa).

148–155 contributes to the ATP binding site; sequence GGAGVGKT.

This sequence belongs to the ATPase alpha/beta chains family. As to quaternary structure, F-type ATPases have 2 components, CF(1) - the catalytic core - and CF(0) - the membrane proton channel. CF(1) has five subunits: alpha(3), beta(3), gamma(1), delta(1), epsilon(1). CF(0) has three main subunits: a(1), b(2) and c(9-12). The alpha and beta chains form an alternating ring which encloses part of the gamma chain. CF(1) is attached to CF(0) by a central stalk formed by the gamma and epsilon chains, while a peripheral stalk is formed by the delta and b chains.

The protein resides in the cell inner membrane. The catalysed reaction is ATP + H2O + 4 H(+)(in) = ADP + phosphate + 5 H(+)(out). Functionally, produces ATP from ADP in the presence of a proton gradient across the membrane. The catalytic sites are hosted primarily by the beta subunits. In Marinobacter nauticus (strain ATCC 700491 / DSM 11845 / VT8) (Marinobacter aquaeolei), this protein is ATP synthase subunit beta.